The sequence spans 363 residues: MIIYTTEVEDINSFYTLESLKEVYGIIWMLVPILTLVLGITIGVLVIVWLEREISAGIQQRIGPEYAGPLGILQALADGTKLLFKENILPSRGNTRLFSIGPAIAVISILLSFSVIPFSSRLILADLNIGIFLWIAISSIAPVGLLMSGYGSNNKYSFLGGLRAAAQSISYEIPLTLCVLSISLLSNSSSTVDIVEAQSKYGFWGWNLWRQPIGFIVFLISSLAECERLPFDLPEAEEELVAGYQTEYSGIKFGLFYVASYLNLLLSSLFVTVLYLGGWNISIPYVFAPELFEINKINGIIGTTIGIFITLAKTYLFLFISIATRWTLPRLRMDQLLNLGWKFLLPISLGNLLLTTSFQLLSL.

A run of 6 helical transmembrane segments spans residues 30–50, 98–118, 129–149, 248–268, 300–320, and 343–363; these read LVPILTLVLGITIGVLVIVWL, FSIGPAIAVISILLSFSVIPF, IGIFLWIAISSIAPVGLLMSG, YSGIKFGLFYVASYLNLLLSS, IIGTTIGIFITLAKTYLFLFI, and FLLPISLGNLLLTTSFQLLSL.

Belongs to the complex I subunit 1 family. As to quaternary structure, NDH is composed of at least 16 different subunits, 5 of which are encoded in the nucleus.

Its subcellular location is the plastid. It localises to the chloroplast thylakoid membrane. The catalysed reaction is a plastoquinone + NADH + (n+1) H(+)(in) = a plastoquinol + NAD(+) + n H(+)(out). It carries out the reaction a plastoquinone + NADPH + (n+1) H(+)(in) = a plastoquinol + NADP(+) + n H(+)(out). NDH shuttles electrons from NAD(P)H:plastoquinone, via FMN and iron-sulfur (Fe-S) centers, to quinones in the photosynthetic chain and possibly in a chloroplast respiratory chain. The immediate electron acceptor for the enzyme in this species is believed to be plastoquinone. Couples the redox reaction to proton translocation, and thus conserves the redox energy in a proton gradient. The chain is NAD(P)H-quinone oxidoreductase subunit 1, chloroplastic from Gossypium hirsutum (Upland cotton).